Here is a 711-residue protein sequence, read N- to C-terminus: Ribosomal RNA large subunit methyltransferase K/L (711 aa).

Positions 43–154 (LAYRITLWTR…NGVITIAMNF (112 aa)) constitute a THUMP domain.

The protein belongs to the methyltransferase superfamily. RlmKL family.

Its subcellular location is the cytoplasm. It catalyses the reaction guanosine(2445) in 23S rRNA + S-adenosyl-L-methionine = N(2)-methylguanosine(2445) in 23S rRNA + S-adenosyl-L-homocysteine + H(+). The catalysed reaction is guanosine(2069) in 23S rRNA + S-adenosyl-L-methionine = N(2)-methylguanosine(2069) in 23S rRNA + S-adenosyl-L-homocysteine + H(+). Specifically methylates the guanine in position 2445 (m2G2445) and the guanine in position 2069 (m7G2069) of 23S rRNA. This Shewanella oneidensis (strain ATCC 700550 / JCM 31522 / CIP 106686 / LMG 19005 / NCIMB 14063 / MR-1) protein is Ribosomal RNA large subunit methyltransferase K/L.